A 43-amino-acid polypeptide reads, in one-letter code: Photosystem I reaction center subunit IX (43 aa).

The helical transmembrane segment at 7 to 27 (YLSVAPVLSALWFGALAGLLI) threads the bilayer.

The protein belongs to the PsaJ family.

The protein localises to the plastid. Its subcellular location is the chloroplast thylakoid membrane. In terms of biological role, may help in the organization of the PsaE and PsaF subunits. This is Photosystem I reaction center subunit IX from Oenothera argillicola (Appalachian evening primrose).